The primary structure comprises 217 residues: Small ribosomal subunit protein uS3 (217 aa).

In terms of domain architecture, KH type-2 spans 38 to 106 (IRKFVQKELA…QVHINIIEIK (69 aa)).

Belongs to the universal ribosomal protein uS3 family. In terms of assembly, part of the 30S ribosomal subunit. Forms a tight complex with proteins S10 and S14.

Binds the lower part of the 30S subunit head. Binds mRNA in the 70S ribosome, positioning it for translation. The chain is Small ribosomal subunit protein uS3 from Streptococcus sanguinis (strain SK36).